The chain runs to 69 residues: ATP synthase protein 8 (69 aa).

The chain crosses the membrane as a helical span at residues 8-24; it reads TWTLTISLMIISLFCIY. Lysine 55 bears the N6-acetyllysine; alternate mark. N6-succinyllysine; alternate is present on lysine 55. Lysine 58 is subject to N6-acetyllysine.

Belongs to the ATPase protein 8 family. In terms of assembly, F-type ATPases have 2 components, CF(1) - the catalytic core - and CF(0) - the membrane proton channel. Component of an ATP synthase complex composed of ATP5PB, ATP5MC1, ATP5F1E, ATP5PD, ATP5ME, ATP5PF, ATP5MF, MT-ATP6, MT-ATP8, ATP5F1A, ATP5F1B, ATP5F1D, ATP5F1C, ATP5PO, ATP5MG, ATP5MK and ATP5MJ. Interacts with PRICKLE3.

The protein resides in the mitochondrion membrane. Mitochondrial membrane ATP synthase (F(1)F(0) ATP synthase or Complex V) produces ATP from ADP in the presence of a proton gradient across the membrane which is generated by electron transport complexes of the respiratory chain. F-type ATPases consist of two structural domains, F(1) - containing the extramembraneous catalytic core and F(0) - containing the membrane proton channel, linked together by a central stalk and a peripheral stalk. During catalysis, ATP synthesis in the catalytic domain of F(1) is coupled via a rotary mechanism of the central stalk subunits to proton translocation. Part of the complex F(0) domain. Minor subunit located with subunit a in the membrane. The protein is ATP synthase protein 8 (MT-ATP8) of Didelphis virginiana (North American opossum).